The sequence spans 367 residues: Polyenoic acids biosynthesis gene cluster protein Ba17b (367 aa).

3 helical membrane-spanning segments follow: residues 16-36 (LEVF…LRFY), 50-70 (WLII…IGAV), and 90-110 (LVAF…TEGL). N-linked (GlcNAc...) asparagine glycosylation is present at N133. Transmembrane regions (helical) follow at residues 137 to 157 (LVLV…CTPF), 183 to 203 (FPNI…VWGL), and 211 to 231 (LVLV…GGDS). A glycan (N-linked (GlcNAc...) asparagine) is linked at N245. A helical membrane pass occupies residues 259-279 (LIIWTVCEPGVYLIAACLLVY).

It belongs to the SAT4 family.

The protein resides in the membrane. The protein operates within secondary metabolite biosynthesis. Part of the gene cluster that mediates the biosynthesis of (2Z,4E,6E,10E)-9-hydroxydodeca-2,4,6,10-tetraenoic acid (BAA), (2E,4E,6E,10E)-9-hydroxydodeca-2,4,6,10-tetraenoic acid (BAB), and (2Z,4E,6E)-octa-2,4,6-trienedioic acid (PBA). The highly reducing polyketide synthase Ba17a is sufficent to produce PBA and BAA. The still to be characterized protein Ba17b leads to an increased production of BAA as well as to the production of the new compound BAB. BAA does not possess insecticidal activity against G.mellonella larvae, however, both BAA and BAB increase the growth of Candida albicans and BAA can mitigate the fungicidal effects of fluconazole over C.albicans, suggesting that generalist pathogens such as M.anisopliae, can potentially manipulate the yeast microbiota found in arthropods (and anywhere else) by the activity of compounds as BAA and BAB. The protein is Polyenoic acids biosynthesis gene cluster protein Ba17b of Metarhizium anisopliae (Entomophthora anisopliae).